The chain runs to 223 residues: Octanoyltransferase (223 aa).

The BPL/LPL catalytic domain occupies 31 to 216; it reads GQIGDTLLLL…QIGEVFALEP (186 aa). Substrate-binding positions include 76–83, 145–147, and 159–161; these read RGGEVTYH, AIG, and GLA. Residue C177 is the Acyl-thioester intermediate of the active site.

This sequence belongs to the LipB family.

The protein localises to the cytoplasm. It catalyses the reaction octanoyl-[ACP] + L-lysyl-[protein] = N(6)-octanoyl-L-lysyl-[protein] + holo-[ACP] + H(+). It participates in protein modification; protein lipoylation via endogenous pathway; protein N(6)-(lipoyl)lysine from octanoyl-[acyl-carrier-protein]: step 1/2. Functionally, catalyzes the transfer of endogenously produced octanoic acid from octanoyl-acyl-carrier-protein onto the lipoyl domains of lipoate-dependent enzymes. Lipoyl-ACP can also act as a substrate although octanoyl-ACP is likely to be the physiological substrate. This chain is Octanoyltransferase, found in Chloroflexus aurantiacus (strain ATCC 29366 / DSM 635 / J-10-fl).